The sequence spans 504 residues: Anaerobic nitric oxide reductase transcription regulator NorR (504 aa).

D57 carries the post-translational modification 4-aspartylphosphate. Positions 187-416 (MIGLSPGMTQ…LEHAIHRAVV (230 aa)) constitute a Sigma-54 factor interaction domain. ATP is bound by residues 215–222 (GETGTGKE) and 278–287 (ADNGTLFLDE). Positions 479 to 498 (WAACARMLETDVANLHRLAK) form a DNA-binding region, H-T-H motif.

It functions in the pathway nitrogen metabolism; nitric oxide reduction. Its function is as follows. Required for the expression of anaerobic nitric oxide (NO) reductase, acts as a transcriptional activator for at least the norVW operon. Activation also requires sigma-54. The chain is Anaerobic nitric oxide reductase transcription regulator NorR from Escherichia coli O6:H1 (strain CFT073 / ATCC 700928 / UPEC).